We begin with the raw amino-acid sequence, 138 residues long: Protein NrdI (138 aa).

It belongs to the NrdI family.

In terms of biological role, probably involved in ribonucleotide reductase function. The protein is Protein NrdI of Mycobacterium leprae (strain TN).